The following is a 546-amino-acid chain: UDP-glycosyltransferase FPY2 (546 aa).

Positions 1 to 20 (MSLPKAQILVVVTVGGSTNS) are cleaved as a signal peptide. A helical membrane pass occupies residues 517-537 (LNNIDVALLFFILLGIISWIT).

This sequence belongs to the glycosyltransferase 28 family.

The protein localises to the membrane. The protein operates within secondary metabolite biosynthesis. In terms of biological role, UDP-glycosyltransferase; part of the gene cluster that mediates the biosynthesis of the gamma-pyrones fusapyrone (FPY) and deoxyfusapyrone (dFPY). FPY is an undecaketide and thus likely synthesized by the polyketide synthase FPY1 from acetyl-CoA functioning as starter unit and the addition of 10 malonyl-CoA extender units by successive Claisen-condensations. Next to this, FPY shares some rare features: C-glycosylated 4-deoxyglucose at C-3, a gem-dimethyl group at C-13, and an alpha-beta to beta-gamma double bond shift at C-20. During FPY biosynthesis mono-C-methyl groups are transferred to the tetra-, penta-, hexa- and heptaketide, while two C-methyl groups are transferred to the nonaketide, suggesting that the CMet domain is programmed to selectively catalyze two successive C-alpha-methylation reactions of the nonaketide, while other alpha-carbons are non- or mono-methylated only. While the origin of the 4'-deoxyglucose moiety remains opaque, its transfer to C-3 is most likely mediated by the C-glycosyltransferase FPY2. Next to this, the hydroxyl group present at C-33 and discriminating between FPY and dFPY, is likely to be installed by the cytochrome P450 monooxygenase FPY7. No putative function can be predicted for the remaining genes FPY3-FPY6. This is UDP-glycosyltransferase FPY2 from Fusarium mangiferae (Mango malformation disease fungus).